Consider the following 190-residue polypeptide: Histone H5 (190 aa).

The disordered stretch occupies residues 1 to 29 (MTESLVLSPAPAKPKRVKASRRSASHPTY). Basic residues predominate over residues 13–24 (KPKRVKASRRSA). Ser23, Ser30, Ser146, and Ser167 each carry phosphoserine. Residues 25-98 (SHPTYSEMIA…GASGSFRLAK (74 aa)) form the H15 domain. The tract at residues 87–190 (GVGASGSFRL…SGARKSPKKK (104 aa)) is disordered. Over residues 104 to 190 (RSPGKKKKAV…SGARKSPKKK (87 aa)) the composition is skewed to basic residues.

This sequence belongs to the histone H1/H5 family. As to expression, erythroid cells.

Its subcellular location is the nucleus. It is found in the chromosome. Histone H5 performs the same function as H1, being necessary for the condensation of nucleosome chains into higher order structures, and replaces histone H1 in certain cells. This Gallus gallus (Chicken) protein is Histone H5.